We begin with the raw amino-acid sequence, 817 residues long: MAYRFIKWFEELSKNDVPLVGGKGANLGEMTNAGIPVPPGFCVTAEAYKYFVENVKVSKEDVKRILGEKVNKGTISEVLAQAPDEPRPLQDWIMDIISKTDVDDSKMLQENTEAIRTLIKSLDMPSEIAEEIKQAYKELSQRFGQEEVYVAVRSSATAEDLPEASFAGQQETYLDVLGADDVIDKVKRCWASLWTARATFYRAKQGFDHSKVYLSAVVQKMVNSEKSGVMFTANPVTNNRNEIMINASWGLGEAVVSGAVTPDEYIVEKGTWKIKEKVIAKKEVMVIRNPETGRGTVMVKVAEYLGPEWVEKQVLTDEQIIEVAKMGQKIEDHYGWPQDIEWAYDKDDGKLYIVQSRPITTLKEEATAEEAEEVEEAEVILKGLGASPGIGAGRVVVIFDASEIDKVKEGDILVTTMTNPDMVPAMKRAAAIVTDEGGRTSHAAIVSRELGIPCVVGTKEATKKLKTGMYVTVDGTRGLVYKGIVKSLVKKKEEAKAEGGQVVVAGAPLVTGTMVKVNVSMPEVAERAAATGADGVGLLRAEHMILSIGQHPIKFIKEGKEEELVEKLAEGIEKVAAAFYPRPVWYRTLDAPTNEFREMPGGEDEPEERNPMLGWRGIRRGLDQPELLRAEFKAIKKVVEKGYNNIGVMLPLVSHPEQIREAKRIAREVGLEPHKDVAWGVMIEVPAAAIIIEDLIKEGIDFVSFGTNDLTQYTLAIDRDNERVAKLYDETHPAVLKLIKHVIKVCKRYGVETSICGQAGSDPKMARILVRLGIDSISANPDAVQLIRQVVAQEERKLMLEAARKQLFEEEEEEELF.

Histidine 442 serves as the catalytic Tele-phosphohistidine intermediate. Residues arginine 540, arginine 587, glutamate 684, glycine 706, threonine 707, asparagine 708, and aspartate 709 each coordinate substrate. Residue glutamate 684 participates in Mg(2+) binding. Residue aspartate 709 participates in Mg(2+) binding. Cysteine 756 (proton donor) is an active-site residue.

It belongs to the PEP-utilizing enzyme family. Homooctamer. The cofactor is Mg(2+).

It carries out the reaction pyruvate + ATP + H2O = phosphoenolpyruvate + AMP + phosphate + 2 H(+). It functions in the pathway carbohydrate biosynthesis; gluconeogenesis. Its function is as follows. Catalyzes the phosphorylation of pyruvate to phosphoenolpyruvate. The sequence is that of Phosphoenolpyruvate synthase (ppsA) from Pyrococcus furiosus (strain ATCC 43587 / DSM 3638 / JCM 8422 / Vc1).